The chain runs to 433 residues: 3-phosphoshikimate 1-carboxyvinyltransferase (433 aa).

Positions 22, 23, and 27 each coordinate 3-phosphoshikimate. A phosphoenolpyruvate-binding site is contributed by K22. G96 and R129 together coordinate phosphoenolpyruvate. Positions 175, 176, 177, 203, 318, 341, and 345 each coordinate 3-phosphoshikimate. Position 177 (Q177) interacts with phosphoenolpyruvate. D318 acts as the Proton acceptor in catalysis. Phosphoenolpyruvate-binding residues include R349, R393, and K418.

Belongs to the EPSP synthase family. As to quaternary structure, monomer.

It localises to the cytoplasm. The enzyme catalyses 3-phosphoshikimate + phosphoenolpyruvate = 5-O-(1-carboxyvinyl)-3-phosphoshikimate + phosphate. Its pathway is metabolic intermediate biosynthesis; chorismate biosynthesis; chorismate from D-erythrose 4-phosphate and phosphoenolpyruvate: step 6/7. In terms of biological role, catalyzes the transfer of the enolpyruvyl moiety of phosphoenolpyruvate (PEP) to the 5-hydroxyl of shikimate-3-phosphate (S3P) to produce enolpyruvyl shikimate-3-phosphate and inorganic phosphate. In Mannheimia succiniciproducens (strain KCTC 0769BP / MBEL55E), this protein is 3-phosphoshikimate 1-carboxyvinyltransferase.